A 3916-amino-acid polypeptide reads, in one-letter code: Fusarin C synthetase (3916 aa).

One can recognise a Ketosynthase family 3 (KS3) domain in the interval 9-440; the sequence is KEPIAIIGTS…GTNVHAIIEQ (432 aa). Active-site for beta-ketoacyl synthase activity residues include cysteine 182, histidine 319, and histidine 360. Residues 548-866 form a malonyl-CoA:ACP transacylase (MAT) domain region; sequence VFTGQGAQWP…QGTVARNIHD (319 aa). The segment at 935–1068 is N-terminal hotdog fold; sequence HPLLGARSVE…GQLRVEFGCS (134 aa). The tract at residues 935 to 1228 is dehydratase (DH) domain; it reads HPLLGARSVE…GLTCTSLLRP (294 aa). The 297-residue stretch at 935–1231 folds into the PKS/mFAS DH domain; it reads HPLLGARSVE…CTSLLRPGPS (297 aa). Histidine 967 acts as the Proton acceptor; for dehydratase activity in catalysis. The segment at 1084–1231 is C-terminal hotdog fold; it reads LTSVNMERFY…CTSLLRPGPS (148 aa). Aspartate 1141 serves as the catalytic Proton donor; for dehydratase activity. Residues 1347-1575 are C-methyltransferase (CMeT) domain; the sequence is IQAVGENLPS…VNDFVDAEKY (229 aa). A ketoreductase (KR) domain 1 region spans residues 2092-2266; that stretch reads TYLLIGCTGG…AASVMHIGMV (175 aa). One can recognise a Carrier 1 domain in the interval 2372-2449; the sequence is EILAVVEEEF…ELCSTVVSHL (78 aa). At serine 2409 the chain carries O-(pantetheine 4'-phosphoryl)serine. The tract at residues 2487 to 2510 is disordered; sequence NEPFTIRNSPNSTQVTSEAGVDED. Polar residues predominate over residues 2492 to 2503; the sequence is IRNSPNSTQVTS. The interval 2522-2806 is condensation; that stretch reads PLSFAQERLW…VNLLPLRLKI (285 aa). An adenylation region spans residues 2975–3385; the sequence is EFVVKQPDDT…RIAGDSQIKL (411 aa). A Carrier 2 domain is found at 3493–3570; that stretch reads KPLTETQERL…EMAAKIDGST (78 aa). Serine 3530 bears the O-(pantetheine 4'-phosphoryl)serine mark. Residues 3612–3833 form a thiolester reductase (R) domain region; the sequence is LTGATGFLGV…DFVPVDVVAA (222 aa).

The protein in the C-terminal section; belongs to the NRP synthetase family.

Its pathway is mycotoxin biosynthesis. Its function is as follows. Fusarin C synthetase; part of the gene cluster that mediates the biosynthesis of the mycotoxin fusarin C. Within the cluster, FUS1, FUS2, FUS8 and FUS9 are sufficient for fusarin production. The roles of the other FUS members are yet undetermined. The fusarin C synthetase FUS1 is responsible for the condensation of one acetyl-coenzyme A (CoA) unit with six malonyl-CoA units and the amide linkage of the arising heptaketide and homoserine, subsequently releasing the first intermediate, prefusarin, as an alcohol with an open ring structure. The cytochrome P450 monooxygenase FUS8 participates in multiple oxidation processes at carbon C-20 and is able to use the FUS1 product as substrate, resulting in formation of 20-hydroxy-prefusarin. This reaction seems to be essential before the 2-pyrrolidone ring closure can be catalyzed by FUS2, generating 20-hydroxy-fusarin. FUS8 is able to further oxidizes carbon C-20 after ring closure, resulting in the formation of carboxy-fusarin C. As the last step, FUS9 methylates the hydroxyl group at C-21 to generate fusarin C. Fusarin C can then rearrange to epi-fusarin C, the (z)-isomers, and fusarin A and fusarin D. The protein is Fusarin C synthetase of Gibberella fujikuroi (strain CBS 195.34 / IMI 58289 / NRRL A-6831) (Bakanae and foot rot disease fungus).